A 296-amino-acid chain; its full sequence is Arginase (296 aa).

Mn(2+)-binding residues include H98, D124, H126, and D128. L-arginine contacts are provided by N130, S137, and D178. 2 residues coordinate Mn(2+): D225 and D227. The L-arginine site is built by D227 and T239.

Belongs to the arginase family. In terms of assembly, monomer. Homodimer; dimerization is dispensable for catalytic activity. Mn(2+) is required as a cofactor.

It carries out the reaction L-arginine + H2O = urea + L-ornithine. It functions in the pathway nitrogen metabolism; urea cycle; L-ornithine and urea from L-arginine: step 1/1. Its activity is regulated as follows. Substitution of the loosely bound surface exposed Mn(2+) with Mg(2+), Zn(2+), Ni(2+) or Co(2+) results in similar catalytic activity, substitution with Cd(2+) and Cu(2+) reduces catalytic activity and substitution with Hg(2+) and Ca(2+) inhibits the enzyme. Inhibited by L-norvaline. In terms of biological role, catalyzes the hydrolysis of L-arginine into urea and L-ornithine, which is a precursor for polyamine biosynthesis. By depleting host L-arginine, a substrate for nitric oxide synthase (NOS), prevents the production of nitric oxide (NO) by host activated macrophages, and thus allows the parasite to evade host immune response. The sequence is that of Arginase from Entamoeba histolytica (strain ATCC 30459 / HM-1:IMSS / ABRM).